The following is a 199-amino-acid chain: Nucleoside triphosphate pyrophosphatase (199 aa).

Asp-72 (proton acceptor) is an active-site residue.

This sequence belongs to the Maf family. It depends on a divalent metal cation as a cofactor.

Its subcellular location is the cytoplasm. The catalysed reaction is a ribonucleoside 5'-triphosphate + H2O = a ribonucleoside 5'-phosphate + diphosphate + H(+). It catalyses the reaction a 2'-deoxyribonucleoside 5'-triphosphate + H2O = a 2'-deoxyribonucleoside 5'-phosphate + diphosphate + H(+). Functionally, nucleoside triphosphate pyrophosphatase. May have a dual role in cell division arrest and in preventing the incorporation of modified nucleotides into cellular nucleic acids. The protein is Nucleoside triphosphate pyrophosphatase of Synechococcus elongatus (strain ATCC 33912 / PCC 7942 / FACHB-805) (Anacystis nidulans R2).